A 240-amino-acid chain; its full sequence is Probable transcriptional regulatory protein HPP12_0160 (240 aa).

The protein belongs to the TACO1 family.

The protein resides in the cytoplasm. This is Probable transcriptional regulatory protein HPP12_0160 from Helicobacter pylori (strain P12).